Reading from the N-terminus, the 218-residue chain is Small ribosomal subunit protein uS3 (218 aa).

One can recognise a KH type-2 domain in the interval 38–106; sequence IREFINQRLS…RVHINILEIK (69 aa).

It belongs to the universal ribosomal protein uS3 family. Part of the 30S ribosomal subunit. Forms a tight complex with proteins S10 and S14.

Functionally, binds the lower part of the 30S subunit head. Binds mRNA in the 70S ribosome, positioning it for translation. This chain is Small ribosomal subunit protein uS3, found in Bacillus licheniformis (strain ATCC 14580 / DSM 13 / JCM 2505 / CCUG 7422 / NBRC 12200 / NCIMB 9375 / NCTC 10341 / NRRL NRS-1264 / Gibson 46).